The sequence spans 741 residues: Polycomb protein Suz12 (741 aa).

Positions Met-1 to Gly-21 are disordered. Ser-20 is subject to Phosphoserine. Glycyl lysine isopeptide (Lys-Gly) (interchain with G-Cter in SUMO) cross-links involve residues Lys-74 and Lys-75. Lys-77 is covalently cross-linked (Glycyl lysine isopeptide (Lys-Gly) (interchain with G-Cter in SUMO); alternate). Lys-77 participates in a covalent cross-link: Glycyl lysine isopeptide (Lys-Gly) (interchain with G-Cter in SUMO2); alternate. The tract at residues Val-81–Ile-108 is interaction with JARID2 and EPOP. The interval Gly-148–Gly-365 is interaction with AEBP2 and PHF19. Glycyl lysine isopeptide (Lys-Gly) (interchain with G-Cter in SUMO2) cross-links involve residues Lys-225 and Lys-392. A C2H2-type zinc finger spans residues Leu-450–His-473. A phosphoserine mark is found at Ser-543, Ser-548, and Ser-585. Residues Arg-565–Phe-641 form a VEFS-box region. Residues Lys-689 to Leu-741 form a disordered region. Over residues Gln-707–Thr-717 the composition is skewed to polar residues.

Belongs to the VEFS (VRN2-EMF2-FIS2-SU(Z)12) family. Component of the PRC2 complex, which consists of the core subunits EED, EZH1 or EZH2, SUZ12, and RBBP4, and various combinations of accessory subunits including AEBP2, JARID2, PHF19, MTF2 and EPOP. Within the complex, interacts (via C2H2 zinc finger domain) with JARID2 and EPOP; JARID2 and EPOP compete for SUZ12 binding. Also interacts with AEBP2 and PHF19. Forms a monomeric PRC2.2 (class 2) complex consisting of at least SUZ12, RBBP4, AEBP2 and JARID2. Forms a dimeric PRC2.1 (class 1, PRC-PCL) complex consisting of at least SUZ12, RBBP4, and PHF19 or MTF2; PHF19 and MTF2 stabilize the dimeric structure which enhances PRC2 interaction with chromatin. The minimum components required for methyltransferase activity of the PRC2/EZH2 complex are EED, EZH2 and SUZ12. The PRC2 complex may also interact with DNMT1, DNMT3A, DNMT3B and PHF1 via the EZH2 subunit and with SIRT1 via the SUZ12 subunit. Interacts with WDR77. Interacts with histone H1. Interacts with CDYL. Interacts with BMAL1. Interacts with EZHIP (via C-terminal region). Interacts with ARMC12. Interacts with DDX18; this interaction inhibits the PRC2 complex. Sumoylated, probably by PIAS2. As to expression, expressed in embryonic stem cells.

The protein localises to the nucleus. It is found in the chromosome. Functionally, polycomb group (PcG) protein. Component of the PRC2/EED-EZH2 complex, which methylates 'Lys-9' (H3K9me) and 'Lys-27' (H3K27me) of histone H3, leading to transcriptional repression of the affected target gene. The PRC2/EED-EZH2 complex may also serve as a recruiting platform for DNA methyltransferases, thereby linking two epigenetic repression systems. Genes repressed by the PRC2/EED-EZH2 complex include HOXA7, HOXB6 and HOXC8. This chain is Polycomb protein Suz12 (Suz12), found in Mus musculus (Mouse).